Consider the following 537-residue polypeptide: Arginine--tRNA ligase (537 aa).

The short motif at 113-123 is the 'HIGH' region element; the sequence is ANPTGELHLGH.

This sequence belongs to the class-I aminoacyl-tRNA synthetase family. Monomer.

Its subcellular location is the cytoplasm. The enzyme catalyses tRNA(Arg) + L-arginine + ATP = L-arginyl-tRNA(Arg) + AMP + diphosphate. The sequence is that of Arginine--tRNA ligase (argS) from Mycoplasma pneumoniae (strain ATCC 29342 / M129 / Subtype 1) (Mycoplasmoides pneumoniae).